We begin with the raw amino-acid sequence, 135 residues long: ATP synthase epsilon chain (135 aa).

Residues 84–107 (SLSEEKQSEEQKQRLERAKKALSS) form a disordered region. Over residues 86–102 (SEEKQSEEQKQRLERAK) the composition is skewed to basic and acidic residues.

Belongs to the ATPase epsilon chain family. As to quaternary structure, F-type ATPases have 2 components, CF(1) - the catalytic core - and CF(0) - the membrane proton channel. CF(1) has five subunits: alpha(3), beta(3), gamma(1), delta(1), epsilon(1). CF(0) has three main subunits: a, b and c.

It is found in the cell membrane. Produces ATP from ADP in the presence of a proton gradient across the membrane. This is ATP synthase epsilon chain from Elusimicrobium minutum (strain Pei191).